The following is a 496-amino-acid chain: Glycogen synthase (496 aa).

Lysine 24 lines the ADP-alpha-D-glucose pocket.

The protein belongs to the glycosyltransferase 1 family. Bacterial/plant glycogen synthase subfamily.

The catalysed reaction is [(1-&gt;4)-alpha-D-glucosyl](n) + ADP-alpha-D-glucose = [(1-&gt;4)-alpha-D-glucosyl](n+1) + ADP + H(+). Its pathway is glycan biosynthesis; glycogen biosynthesis. In terms of biological role, synthesizes alpha-1,4-glucan chains using ADP-glucose. This chain is Glycogen synthase, found in Nitrosospira multiformis (strain ATCC 25196 / NCIMB 11849 / C 71).